The sequence spans 52 residues: Large ribosomal subunit protein bL33 (52 aa).

The protein belongs to the bacterial ribosomal protein bL33 family.

The protein is Large ribosomal subunit protein bL33 of Campylobacter jejuni subsp. jejuni serotype O:6 (strain 81116 / NCTC 11828).